The following is a 94-amino-acid chain: Integration host factor subunit beta (94 aa).

This sequence belongs to the bacterial histone-like protein family. As to quaternary structure, heterodimer of an alpha and a beta chain.

Its function is as follows. This protein is one of the two subunits of integration host factor, a specific DNA-binding protein that functions in genetic recombination as well as in transcriptional and translational control. The polypeptide is Integration host factor subunit beta (Vibrio atlanticus (strain LGP32) (Vibrio splendidus (strain Mel32))).